Here is a 160-residue protein sequence, read N- to C-terminus: Nucleotide-binding protein BAV0791 (160 aa).

Belongs to the YajQ family.

In terms of biological role, nucleotide-binding protein. The chain is Nucleotide-binding protein BAV0791 from Bordetella avium (strain 197N).